An 87-amino-acid chain; its full sequence is Apolipoprotein C-I (87 aa).

The signal sequence occupies residues 1 to 26 (MRLILSLPVLAVVLAMVLEGPAPAQA).

The protein belongs to the apolipoprotein C1 family.

It localises to the secreted. Inhibitor of lipoprotein binding to the low density lipoprotein (LDL) receptor, LDL receptor-related protein, and very low density lipoprotein (VLDL) receptor. Associates with high density lipoproteins (HDL) and the triacylglycerol-rich lipoproteins in the plasma and makes up about 10% of the protein of the VLDL and 2% of that of HDL. Appears to interfere directly with fatty acid uptake and is also the major plasma inhibitor of cholesteryl ester transfer protein (CETP). Binds free fatty acids and reduces their intracellular esterification. Modulates the interaction of APOE with beta-migrating VLDL and inhibits binding of beta-VLDL to the LDL receptor-related protein. The polypeptide is Apolipoprotein C-I (APOC1) (Pteropus vampyrus (Large flying fox)).